We begin with the raw amino-acid sequence, 180 residues long: Bifunctional protein PyrR (180 aa).

A PRPP-binding motif is present at residues 99 to 111 (VILVDDVLYTCRT).

Belongs to the purine/pyrimidine phosphoribosyltransferase family. PyrR subfamily. Homodimer and homohexamer; in equilibrium.

It catalyses the reaction UMP + diphosphate = 5-phospho-alpha-D-ribose 1-diphosphate + uracil. Functionally, regulates transcriptional attenuation of the pyrimidine nucleotide (pyr) operon by binding in a uridine-dependent manner to specific sites on pyr mRNA. This disrupts an antiterminator hairpin in the RNA and favors formation of a downstream transcription terminator, leading to a reduced expression of downstream genes. Its function is as follows. Also displays a weak uracil phosphoribosyltransferase activity which is not physiologically significant. This is Bifunctional protein PyrR from Clostridium botulinum (strain Eklund 17B / Type B).